The chain runs to 333 residues: Eukaryotic translation initiation factor 2 subunit 2 (333 aa).

Disordered stretches follow at residues 1 to 120 (MSGD…LDIM) and 139 to 165 (ILEK…QTGP). N-acetylserine is present on S2. Residue S2 is modified to Phosphoserine. S13 is subject to Phosphoserine; by PKC; in vitro. The span at 13–22 (SKKKKKKKKP) shows a compositional bias: basic residues. At T36 the chain carries Phosphothreonine. Residues 40–51 (ETKEVEPEPTED) show a composition bias toward basic and acidic residues. Residue S67 is modified to Phosphoserine; by CK2. Basic and acidic residues predominate over residues 96–105 (EGVKDLKIEN). Residue K102 forms a Glycyl lysine isopeptide (Lys-Gly) (interchain with G-Cter in SUMO2) linkage. Acidic residues-rich tracts occupy residues 106-118 (DVQE…DDLD) and 139-149 (ILEKDEALEDE). Phosphoserine is present on S158. A Phosphoserine; by PKA; in vitro modification is found at S218. 2 positions are modified to N6-acetyllysine: K265 and K293. The segment at 281-305 (CHTCRSPDTILQKDTRLYFLQCETC) adopts a C4-type zinc-finger fold.

This sequence belongs to the eIF-2-beta/eIF-5 family. Eukaryotic translation initiation factor 2 eIF2 is a heterotrimeric complex composed of an alpha (EIF2S1), a beta (EIF2S2) and a gamma (EIF2S3) chain. eIF2 is member of the 43S pre-initiation complex (43S PIC). eIF2 forms a complex with at least CELF1/CUGBP1, CALR, CALR3, EIF2S1, EIF2S2, HSP90B1 and HSPA5. Interacts with BZW2/5MP1. Interacts with EIF5. In terms of processing, the N-terminus is blocked.

Its subcellular location is the cytoplasm. It localises to the cytosol. Component of the eIF2 complex that functions in the early steps of protein synthesis by forming a ternary complex with GTP and initiator tRNA. This complex binds to a 40S ribosomal subunit, followed by mRNA binding to form the 43S pre-initiation complex (43S PIC). Junction of the 60S ribosomal subunit to form the 80S initiation complex is preceded by hydrolysis of the GTP bound to eIF2 and release of an eIF2-GDP binary complex. In order for eIF2 to recycle and catalyze another round of initiation, the GDP bound to eIF2 must exchange with GTP by way of a reaction catalyzed by eIF2B. The polypeptide is Eukaryotic translation initiation factor 2 subunit 2 (EIF2S2) (Oryctolagus cuniculus (Rabbit)).